A 93-amino-acid chain; its full sequence is Small ribosomal subunit protein uS19 (93 aa).

The segment at 73–93 (EFSPTRTFRGHVKDDRKSKRR) is disordered. Residues 83–93 (HVKDDRKSKRR) are compositionally biased toward basic and acidic residues.

The protein belongs to the universal ribosomal protein uS19 family.

Protein S19 forms a complex with S13 that binds strongly to the 16S ribosomal RNA. In Streptomyces coelicolor (strain ATCC BAA-471 / A3(2) / M145), this protein is Small ribosomal subunit protein uS19.